The primary structure comprises 450 residues: UDP-N-acetylmuramoylalanine--D-glutamate ligase (450 aa).

G119 to T125 contributes to the ATP binding site.

This sequence belongs to the MurCDEF family.

Its subcellular location is the cytoplasm. It carries out the reaction UDP-N-acetyl-alpha-D-muramoyl-L-alanine + D-glutamate + ATP = UDP-N-acetyl-alpha-D-muramoyl-L-alanyl-D-glutamate + ADP + phosphate + H(+). The protein operates within cell wall biogenesis; peptidoglycan biosynthesis. Its function is as follows. Cell wall formation. Catalyzes the addition of glutamate to the nucleotide precursor UDP-N-acetylmuramoyl-L-alanine (UMA). The polypeptide is UDP-N-acetylmuramoylalanine--D-glutamate ligase (Streptococcus gordonii (strain Challis / ATCC 35105 / BCRC 15272 / CH1 / DL1 / V288)).